Consider the following 946-residue polypeptide: Glycine dehydrogenase (decarboxylating) (946 aa).

The residue at position 700 (lysine 700) is an N6-(pyridoxal phosphate)lysine.

Belongs to the GcvP family. As to quaternary structure, the glycine cleavage system is composed of four proteins: P, T, L and H. Pyridoxal 5'-phosphate is required as a cofactor.

It catalyses the reaction N(6)-[(R)-lipoyl]-L-lysyl-[glycine-cleavage complex H protein] + glycine + H(+) = N(6)-[(R)-S(8)-aminomethyldihydrolipoyl]-L-lysyl-[glycine-cleavage complex H protein] + CO2. In terms of biological role, the glycine cleavage system catalyzes the degradation of glycine. The P protein binds the alpha-amino group of glycine through its pyridoxal phosphate cofactor; CO(2) is released and the remaining methylamine moiety is then transferred to the lipoamide cofactor of the H protein. The sequence is that of Glycine dehydrogenase (decarboxylating) from Pseudomonas fluorescens (strain SBW25).